We begin with the raw amino-acid sequence, 1052 residues long: Carbamoyl phosphate synthase large chain (1052 aa).

Residues 1–399 (MRENVKRVLV…ALQKAVRMLD (399 aa)) are carboxyphosphate synthetic domain. Residues Arg-127, Arg-167, Gly-173, Gly-174, Lys-206, Leu-208, Glu-213, Gly-239, Val-240, His-241, Gln-282, and Glu-296 each contribute to the ATP site. Residues 131–325 (RETMINVNLP…LAYVSAKLAL (195 aa)) form the ATP-grasp 1 domain. Positions 282, 296, and 298 each coordinate Mg(2+). Positions 282, 296, and 298 each coordinate Mn(2+). The segment at 400–548 (LGEPGIIGGK…VTYNGTEDDI (149 aa)) is oligomerization domain. The interval 549–930 (EFSNGIRKLL…LKSWLSSSPN (382 aa)) is carbamoyl phosphate synthetic domain. The region spanning 674–864 (SRLLDKLGIK…IIDLALTGVI (191 aa)) is the ATP-grasp 2 domain. ATP-binding residues include Arg-710, Lys-749, Ile-751, Glu-756, Gly-780, Val-781, His-782, Ser-783, Gln-823, and Glu-835. Gln-823, Glu-835, and Asn-837 together coordinate Mg(2+). Mn(2+) contacts are provided by Gln-823, Glu-835, and Asn-837. The MGS-like domain occupies 930-1052 (NRLPDQKGIA…YEIGEYGAGI (123 aa)). The segment at 931-1052 (RLPDQKGIAL…YEIGEYGAGI (122 aa)) is allosteric domain.

It belongs to the CarB family. In terms of assembly, composed of two chains; the small (or glutamine) chain promotes the hydrolysis of glutamine to ammonia, which is used by the large (or ammonia) chain to synthesize carbamoyl phosphate. Tetramer of heterodimers (alpha,beta)4. It depends on Mg(2+) as a cofactor. Mn(2+) serves as cofactor.

The catalysed reaction is hydrogencarbonate + L-glutamine + 2 ATP + H2O = carbamoyl phosphate + L-glutamate + 2 ADP + phosphate + 2 H(+). It carries out the reaction hydrogencarbonate + NH4(+) + 2 ATP = carbamoyl phosphate + 2 ADP + phosphate + 2 H(+). It functions in the pathway amino-acid biosynthesis; L-arginine biosynthesis; carbamoyl phosphate from bicarbonate: step 1/1. It participates in pyrimidine metabolism; UMP biosynthesis via de novo pathway; (S)-dihydroorotate from bicarbonate: step 1/3. Its function is as follows. Large subunit of the glutamine-dependent carbamoyl phosphate synthetase (CPSase). CPSase catalyzes the formation of carbamoyl phosphate from the ammonia moiety of glutamine, carbonate, and phosphate donated by ATP, constituting the first step of 2 biosynthetic pathways, one leading to arginine and/or urea and the other to pyrimidine nucleotides. The large subunit (synthetase) binds the substrates ammonia (free or transferred from glutamine from the small subunit), hydrogencarbonate and ATP and carries out an ATP-coupled ligase reaction, activating hydrogencarbonate by forming carboxy phosphate which reacts with ammonia to form carbamoyl phosphate. The chain is Carbamoyl phosphate synthase large chain from Sulfolobus acidocaldarius (strain ATCC 33909 / DSM 639 / JCM 8929 / NBRC 15157 / NCIMB 11770).